A 717-amino-acid chain; its full sequence is Pre-mRNA-splicing factor ATP-dependent RNA helicase DEAH10 (717 aa).

The interval 1-29 (MPSMAQGELKSFVQNSRPNPKSPTVSPFS) is disordered. Polar residues predominate over residues 12–29 (FVQNSRPNPKSPTVSPFS). The Helicase ATP-binding domain occupies 51 to 256 (VEEVQKNDIL…FGGAKAVHVQ (206 aa)). 64 to 71 (GETGSGKT) is an ATP binding site. The DEAH box motif lies at 162–165 (DEAH). The 176-residue stretch at 278-453 (TLVTIFQIHF…NIILQLKALG (176 aa)) folds into the Helicase C-terminal domain.

Belongs to the DEAD box helicase family. DEAH subfamily. PRP22 sub-subfamily. As to expression, widely expressed but spatially and temporally regulated during development.

The protein localises to the nucleus. It localises to the nucleolus. It catalyses the reaction ATP + H2O = ADP + phosphate + H(+). In terms of biological role, involved in pre-mRNA splicing. Plays a role during development in processes such as meristem maintenance, leaf morphogenesis and root morphogenesis. This chain is Pre-mRNA-splicing factor ATP-dependent RNA helicase DEAH10, found in Arabidopsis thaliana (Mouse-ear cress).